The chain runs to 131 residues: Small ribosomal subunit protein uS11 (131 aa).

This sequence belongs to the universal ribosomal protein uS11 family. In terms of assembly, part of the 30S ribosomal subunit. Interacts with proteins S7 and S18. Binds to IF-3. Interacts with VmlR. Interacts with BrxC.

Located on the platform of the 30S subunit, it bridges several disparate RNA helices of the 16S rRNA. Forms part of the Shine-Dalgarno cleft in the 70S ribosome. The chain is Small ribosomal subunit protein uS11 from Bacillus subtilis (strain 168).